A 201-amino-acid chain; its full sequence is Large ribosomal subunit protein uL4 (201 aa).

The disordered stretch occupies residues 46–71; the sequence is QKTRAEITGSGKKPWRQKGTGRARSG.

This sequence belongs to the universal ribosomal protein uL4 family. As to quaternary structure, part of the 50S ribosomal subunit.

One of the primary rRNA binding proteins, this protein initially binds near the 5'-end of the 23S rRNA. It is important during the early stages of 50S assembly. It makes multiple contacts with different domains of the 23S rRNA in the assembled 50S subunit and ribosome. Its function is as follows. Forms part of the polypeptide exit tunnel. In Klebsiella pneumoniae (strain 342), this protein is Large ribosomal subunit protein uL4.